A 261-amino-acid polypeptide reads, in one-letter code: Carnitinyl-CoA dehydratase (261 aa).

Catalysis depends on E111, which acts as the Nucleophile. E131 (proton acceptor) is an active-site residue.

This sequence belongs to the enoyl-CoA hydratase/isomerase family.

It catalyses the reaction (R)-carnitinyl-CoA = crotonobetainyl-CoA + H2O. It participates in amine and polyamine metabolism; carnitine metabolism. Catalyzes the reversible dehydration of L-carnitinyl-CoA to crotonobetainyl-CoA. This is Carnitinyl-CoA dehydratase from Salmonella dublin (strain CT_02021853).